The following is a 254-amino-acid chain: DNA repair protein RecO (254 aa).

It belongs to the RecO family.

Functionally, involved in DNA repair and RecF pathway recombination. This chain is DNA repair protein RecO, found in Rhodopseudomonas palustris (strain BisB18).